The primary structure comprises 150 residues: 3-dehydroquinate dehydratase (150 aa).

The active-site Proton acceptor is the Tyr26. Residues Asn77, His83, and Asp90 each contribute to the substrate site. The active-site Proton donor is His103. Substrate-binding positions include 104-105 and Arg114; that span reads LS.

The protein belongs to the type-II 3-dehydroquinase family. Homododecamer.

It carries out the reaction 3-dehydroquinate = 3-dehydroshikimate + H2O. It functions in the pathway metabolic intermediate biosynthesis; chorismate biosynthesis; chorismate from D-erythrose 4-phosphate and phosphoenolpyruvate: step 3/7. Functionally, catalyzes a trans-dehydration via an enolate intermediate. This is 3-dehydroquinate dehydratase from Yersinia enterocolitica serotype O:8 / biotype 1B (strain NCTC 13174 / 8081).